The primary structure comprises 597 residues: uncharacterized protein (597 aa).

2 consecutive transmembrane segments (helical) span residues 4-23 (LLLALLLCLAVGTAGGFKIV) and 209-231 (FVSVSAPGFVGVTAAMSSAGIAI).

The protein resides in the cell membrane. This is an uncharacterized protein from Archaeoglobus fulgidus (strain ATCC 49558 / DSM 4304 / JCM 9628 / NBRC 100126 / VC-16).